A 507-amino-acid polypeptide reads, in one-letter code: Probable D-lactate dehydrogenase, mitochondrial (507 aa).

The transit peptide at 1–52 (MARLLRSATWELFPWRGYCSQKAKGELCRDFVEALKAVVGGSHVSTAAVVRE) directs the protein to the mitochondrion. Position 36 is an N6-acetyllysine (K36). One can recognise an FAD-binding PCMH-type domain in the interval 62–265 (RCEPPDAVVW…TATTLRLHPA (204 aa)). Residue K315 is modified to N6-acetyllysine. K358 is modified (N6-acetyllysine; alternate). K358 is modified (N6-succinyllysine; alternate). 2 positions are modified to N6-acetyllysine: K445 and K472.

The protein belongs to the FAD-binding oxidoreductase/transferase type 4 family. Interacts with CSRP3. The cofactor is FAD. In terms of tissue distribution, expressed moderately in heart and liver and at lower levels in skeletal muscle and kidney.

The protein localises to the mitochondrion. It carries out the reaction (R)-lactate + 2 Fe(III)-[cytochrome c] = 2 Fe(II)-[cytochrome c] + pyruvate + 2 H(+). Functionally, involved in D-lactate, but not L-lactate catabolic process. The chain is Probable D-lactate dehydrogenase, mitochondrial from Homo sapiens (Human).